Consider the following 332-residue polypeptide: tRNA-dihydrouridine synthase B (332 aa).

FMN-binding positions include P16–A18 and Q70. C100 (proton donor) is an active-site residue. FMN-binding positions include K139, N200–D202, and G224–R225.

It belongs to the Dus family. DusB subfamily. The cofactor is FMN.

The enzyme catalyses a 5,6-dihydrouridine in tRNA + NAD(+) = a uridine in tRNA + NADH + H(+). The catalysed reaction is a 5,6-dihydrouridine in tRNA + NADP(+) = a uridine in tRNA + NADPH + H(+). Functionally, catalyzes the synthesis of 5,6-dihydrouridine (D), a modified base found in the D-loop of most tRNAs, via the reduction of the C5-C6 double bond in target uridines. This chain is tRNA-dihydrouridine synthase B, found in Pasteurella multocida (strain Pm70).